A 1022-amino-acid polypeptide reads, in one-letter code: Sodium/potassium-transporting ATPase subunit alpha-1 (1022 aa).

Residues 1–5 (MGRGT) constitute a propeptide that is removed on maturation. Residues 1–10 (MGRGTGHDQY) show a composition bias toward basic and acidic residues. Residues 1 to 34 (MGRGTGHDQYELAATSEGGRKKKRDKKKKDMDDL) form a disordered region. At 6–86 (GHDQYELAAT…NALTPPPTTP (81 aa)) the chain is on the cytoplasmic side. Ser-16 is modified (phosphoserine; by PKC). The interval 81 to 83 (PPP) is interaction with phosphoinositide-3 kinase. The helical transmembrane segment at 87 to 107 (EWVKFCRQLFGGFSMLLWIGA) threads the bilayer. The Extracellular portion of the chain corresponds to 108-130 (ILCFLAYGIQAASEDEPANDNLY). The chain crosses the membrane as a helical span at residues 131–151 (LGVVLSAVVIITGCFSYYQEA). Residues 152 to 287 (KSSRIMDSFK…VGRTPISIEI (136 aa)) are Cytoplasmic-facing. The interval 213–234 (DNSSLTGESEPQTRSPDFSNEN) is disordered. The helical transmembrane segment at 288 to 307 (EHFIHIITGVAVFLGVSFFI) threads the bilayer. The Extracellular portion of the chain corresponds to 308–319 (LSLILGYAWLEA). The helical transmembrane segment at 320 to 337 (VIFLIGIIVANVPEGLLA) threads the bilayer. The Cytoplasmic portion of the chain corresponds to 338-771 (TVTVCLTLTA…EEGRLIFDNL (434 aa)). Asp-375 functions as the 4-aspartylphosphate intermediate in the catalytic mechanism. Lys-486 contributes to the ATP binding site. Positions 716 and 720 each coordinate Mg(2+). The helical transmembrane segment at 772 to 791 (KKSIAYTLTSNIPEITPFLL) threads the bilayer. Residues 792–801 (FIIANIPLPL) are Extracellular-facing. The chain crosses the membrane as a helical span at residues 802–822 (GTVTILCIDLGTDMVPAISLA). Residues 823 to 842 (YEAAESDIMKRQPRNPRTDK) lie on the Cytoplasmic side of the membrane. The chain crosses the membrane as a helical span at residues 843 to 865 (LVNERLISIAYGQIGMMQATAGF). The Extracellular segment spans residues 866–917 (FTYFVILAENGFLPSTLLGIRVKWDDKYVNDLEDSYGQQWTYEQRKIVEYTC). The helical transmembrane segment at 918 to 937 (HTSFFASIVIVQWADLIICK) threads the bilayer. The Cytoplasmic segment spans residues 938 to 950 (TRRNSIIQQGMKN). Residue Ser-942 is modified to Phosphoserine; by PKA. A helical transmembrane segment spans residues 951–969 (KILIFGLFEETALAAFLSY). Topologically, residues 970–984 (CPGMDVALRMYPLKP) are extracellular. A helical membrane pass occupies residues 985 to 1005 (SWWFCAFPYSLLIFLYDEARR). Residues 1006 to 1022 (FILRRNPDGWVERETYY) lie on the Cytoplasmic side of the membrane.

It belongs to the cation transport ATPase (P-type) (TC 3.A.3) family. Type IIC subfamily. The sodium/potassium-transporting ATPase is composed of a catalytic alpha subunit, an auxiliary non-catalytic beta subunit and an additional regulatory subunit.

Its subcellular location is the cell membrane. The protein localises to the sarcolemma. It carries out the reaction K(+)(out) + Na(+)(in) + ATP + H2O = K(+)(in) + Na(+)(out) + ADP + phosphate + H(+). This is the catalytic component of the active enzyme, which catalyzes the hydrolysis of ATP coupled with the exchange of sodium and potassium ions across the plasma membrane. This action creates the electrochemical gradient of sodium and potassium ions, providing the energy for active transport of various nutrients. This Anguilla anguilla (European freshwater eel) protein is Sodium/potassium-transporting ATPase subunit alpha-1 (atp1a1).